Reading from the N-terminus, the 104-residue chain is Secretoglobin family 3A member 1 (104 aa).

An N-terminal signal peptide occupies residues 1–21; the sequence is MKLTTTFLVLCVALLSDSGVA.

It belongs to the secretoglobin family. UGRP subfamily. As to quaternary structure, homodimer; disulfide-linked. In terms of tissue distribution, highly expressed in lung, where it localizes to epithelial cells lining the trachea and bronchi. Expression in lung is mainly restricted to bronchi, submucosal glands of the trachea, and tracheal epithelium, with little expression in terminal bronchioles. Expressed in uterus where it localizes to epithelial cells of the uterine glands. Also detected in heart, stomach and small intestine.

Its subcellular location is the secreted. Functionally, secreted cytokine-like protein. Inhibits cell growth in vitro. This chain is Secretoglobin family 3A member 1 (Scgb3a1), found in Mus musculus (Mouse).